The sequence spans 345 residues: Phenylalanine--tRNA ligase alpha subunit (345 aa).

Glutamate 259 is a Mg(2+) binding site.

Belongs to the class-II aminoacyl-tRNA synthetase family. Phe-tRNA synthetase alpha subunit type 1 subfamily. As to quaternary structure, tetramer of two alpha and two beta subunits. Mg(2+) serves as cofactor.

It is found in the cytoplasm. It carries out the reaction tRNA(Phe) + L-phenylalanine + ATP = L-phenylalanyl-tRNA(Phe) + AMP + diphosphate + H(+). The protein is Phenylalanine--tRNA ligase alpha subunit of Lactococcus lactis subsp. cremoris (strain SK11).